Here is a 390-residue protein sequence, read N- to C-terminus: Queuine tRNA-ribosyltransferase (390 aa).

Residue aspartate 92 is the Proton acceptor of the active site. Residues 92–96 (DSGGF), aspartate 146, glutamine 195, and glycine 222 each bind substrate. An RNA binding region spans residues 253 to 259 (GVGTPED). Aspartate 272 functions as the Nucleophile in the catalytic mechanism. Residues 277–281 (TRNAR) form an RNA binding; important for wobble base 34 recognition region. Zn(2+) contacts are provided by cysteine 310, cysteine 312, cysteine 315, and histidine 354.

It belongs to the queuine tRNA-ribosyltransferase family. In terms of assembly, homodimer. Within each dimer, one monomer is responsible for RNA recognition and catalysis, while the other monomer binds to the replacement base PreQ1. It depends on Zn(2+) as a cofactor.

It catalyses the reaction 7-aminomethyl-7-carbaguanine + guanosine(34) in tRNA = 7-aminomethyl-7-carbaguanosine(34) in tRNA + guanine. Its pathway is tRNA modification; tRNA-queuosine biosynthesis. Its function is as follows. Catalyzes the base-exchange of a guanine (G) residue with the queuine precursor 7-aminomethyl-7-deazaguanine (PreQ1) at position 34 (anticodon wobble position) in tRNAs with GU(N) anticodons (tRNA-Asp, -Asn, -His and -Tyr). Catalysis occurs through a double-displacement mechanism. The nucleophile active site attacks the C1' of nucleotide 34 to detach the guanine base from the RNA, forming a covalent enzyme-RNA intermediate. The proton acceptor active site deprotonates the incoming PreQ1, allowing a nucleophilic attack on the C1' of the ribose to form the product. After dissociation, two additional enzymatic reactions on the tRNA convert PreQ1 to queuine (Q), resulting in the hypermodified nucleoside queuosine (7-(((4,5-cis-dihydroxy-2-cyclopenten-1-yl)amino)methyl)-7-deazaguanosine). The polypeptide is Queuine tRNA-ribosyltransferase (Acidovorax sp. (strain JS42)).